The primary structure comprises 95 residues: Scorpine-like peptide Smp76 (95 aa).

The first 19 residues, 1–19 (MNCKLTALLFLGLIVIASC), serve as a signal peptide directing secretion. The 41-residue stretch at 55 to 95 (EFQCVANVDTLGNCKKHCAKTTGEKGYCHGTKCKCGIELSY) folds into the BetaSPN-type CS-alpha/beta domain. 3 disulfide bridges follow: Cys-58-Cys-82, Cys-68-Cys-87, and Cys-72-Cys-89.

Disulfide bonds are critical for antiviral function, and their disruption inhibit viral activity. In terms of tissue distribution, expressed by the venom gland.

Its subcellular location is the secreted. Functionally, antibacterial peptide. Dose-dependently inhibits Dengue virus (DENV), Zika virus (ZIKV) and Hepatitis C virus (HCV) infections. Two mechanisms of action have been described by two different groups: one involving activity on extracellular particles, and the other regulating the immune system. On Dengue virus (DENV), Zika virus (ZIKV), suppress the established viral infection, similar to the effect of interferon (IFN)-beta. Mechanistically, upregulates the expression of IFN-beta by activating interferon regulatory transcription factor 3 (IRF3) phosphorylation. On HCV and DENV, acts by inactivating extra-cellular infectious particles without affecting viral replication. Shows very weak inhibition on measles virus. Is neither toxic nor hemolytic in vitro at high concentrations. The chain is Scorpine-like peptide Smp76 from Scorpio palmatus (Israeli golden scorpion).